A 179-amino-acid polypeptide reads, in one-letter code: Inner membrane-spanning protein YciB (179 aa).

6 consecutive transmembrane segments (helical) span residues 3–23 (FLFD…ADIY), 24–44 (TATA…WFRH), 49–69 (PMQW…LVLH), 76–96 (WKPT…VLVW), 121–141 (LAWA…AYQF), and 149–169 (FKLF…SVWL).

It belongs to the YciB family.

It is found in the cell inner membrane. Plays a role in cell envelope biogenesis, maintenance of cell envelope integrity and membrane homeostasis. The polypeptide is Inner membrane-spanning protein YciB (Cupriavidus taiwanensis (strain DSM 17343 / BCRC 17206 / CCUG 44338 / CIP 107171 / LMG 19424 / R1) (Ralstonia taiwanensis (strain LMG 19424))).